The following is a 500-amino-acid chain: L-arabinose isomerase (500 aa).

Mn(2+)-binding residues include glutamate 306, glutamate 333, histidine 350, and histidine 450.

This sequence belongs to the arabinose isomerase family. As to quaternary structure, homohexamer. It depends on Mn(2+) as a cofactor.

The enzyme catalyses beta-L-arabinopyranose = L-ribulose. The protein operates within carbohydrate degradation; L-arabinose degradation via L-ribulose; D-xylulose 5-phosphate from L-arabinose (bacterial route): step 1/3. Catalyzes the conversion of L-arabinose to L-ribulose. This chain is L-arabinose isomerase, found in Shigella flexneri serotype 5b (strain 8401).